Consider the following 248-residue polypeptide: Probable transcriptional regulatory protein Bind_0345 (248 aa).

This sequence belongs to the TACO1 family.

It localises to the cytoplasm. This is Probable transcriptional regulatory protein Bind_0345 from Beijerinckia indica subsp. indica (strain ATCC 9039 / DSM 1715 / NCIMB 8712).